Reading from the N-terminus, the 641-residue chain is Chaperone protein DnaK (641 aa).

At T200 the chain carries Phosphothreonine; by autocatalysis. The span at 605–623 shows a compositional bias: low complexity; it reads AAEQGGSADAASGNAQASK. Residues 605–627 are disordered; sequence AAEQGGSADAASGNAQASKAADD.

It belongs to the heat shock protein 70 family.

In terms of biological role, acts as a chaperone. The sequence is that of Chaperone protein DnaK from Xanthomonas oryzae pv. oryzae (strain MAFF 311018).